Here is a 415-residue protein sequence, read N- to C-terminus: Adenosylhomocysteinase (415 aa).

The substrate site is built by T53, D124, and E147. 148 to 150 (TTT) contacts NAD(+). K177 and D181 together coordinate substrate. NAD(+) contacts are provided by residues N182, 211–216 (GYGWVG), E234, N269, 290–292 (SGH), and N337.

It belongs to the adenosylhomocysteinase family. Requires NAD(+) as cofactor.

It is found in the cytoplasm. It carries out the reaction S-adenosyl-L-homocysteine + H2O = L-homocysteine + adenosine. It participates in amino-acid biosynthesis; L-homocysteine biosynthesis; L-homocysteine from S-adenosyl-L-homocysteine: step 1/1. Its function is as follows. May play a key role in the regulation of the intracellular concentration of adenosylhomocysteine. The protein is Adenosylhomocysteinase of Sulfolobus acidocaldarius (strain ATCC 33909 / DSM 639 / JCM 8929 / NBRC 15157 / NCIMB 11770).